We begin with the raw amino-acid sequence, 555 residues long: Dihydroxy-acid dehydratase (555 aa).

Asp78 provides a ligand contact to Mg(2+). Cys119 contributes to the [2Fe-2S] cluster binding site. Residues Asp120 and Lys121 each contribute to the Mg(2+) site. The residue at position 121 (Lys121) is an N6-carboxylysine. Position 195 (Cys195) interacts with [2Fe-2S] cluster. Glu444 is a binding site for Mg(2+). The active-site Proton acceptor is Ser470.

This sequence belongs to the IlvD/Edd family. As to quaternary structure, homodimer. The cofactor is [2Fe-2S] cluster. Mg(2+) serves as cofactor.

It carries out the reaction (2R)-2,3-dihydroxy-3-methylbutanoate = 3-methyl-2-oxobutanoate + H2O. The catalysed reaction is (2R,3R)-2,3-dihydroxy-3-methylpentanoate = (S)-3-methyl-2-oxopentanoate + H2O. Its pathway is amino-acid biosynthesis; L-isoleucine biosynthesis; L-isoleucine from 2-oxobutanoate: step 3/4. It participates in amino-acid biosynthesis; L-valine biosynthesis; L-valine from pyruvate: step 3/4. Functionally, functions in the biosynthesis of branched-chain amino acids. Catalyzes the dehydration of (2R,3R)-2,3-dihydroxy-3-methylpentanoate (2,3-dihydroxy-3-methylvalerate) into 2-oxo-3-methylpentanoate (2-oxo-3-methylvalerate) and of (2R)-2,3-dihydroxy-3-methylbutanoate (2,3-dihydroxyisovalerate) into 2-oxo-3-methylbutanoate (2-oxoisovalerate), the penultimate precursor to L-isoleucine and L-valine, respectively. This Dehalococcoides mccartyi (strain ATCC BAA-2266 / KCTC 15142 / 195) (Dehalococcoides ethenogenes (strain 195)) protein is Dihydroxy-acid dehydratase.